The primary structure comprises 274 residues: tRNA pseudouridine synthase A (274 aa).

Aspartate 57 acts as the Nucleophile in catalysis. Tyrosine 115 contributes to the substrate binding site.

The protein belongs to the tRNA pseudouridine synthase TruA family. Homodimer.

The catalysed reaction is uridine(38/39/40) in tRNA = pseudouridine(38/39/40) in tRNA. Formation of pseudouridine at positions 38, 39 and 40 in the anticodon stem and loop of transfer RNAs. The polypeptide is tRNA pseudouridine synthase A (Frankia casuarinae (strain DSM 45818 / CECT 9043 / HFP020203 / CcI3)).